We begin with the raw amino-acid sequence, 34 residues long: Brevinin-2Ec (34 aa).

C28 and C34 are oxidised to a cystine.

Belongs to the frog skin active peptide (FSAP) family. Brevinin subfamily. As to expression, expressed by the skin glands.

It is found in the secreted. Its function is as follows. Shows antibacterial activity against representative Gram-negative and Gram-positive bacterial species, and hemolytic activity. This Pelophylax lessonae (Pool frog) protein is Brevinin-2Ec.